The sequence spans 408 residues: Cell division protein FtsZ 2 (408 aa).

GTP is bound by residues 130–132 (GTG), glutamate 169, arginine 173, and aspartate 216.

This sequence belongs to the FtsZ family. Homodimer. Polymerizes to form a dynamic ring structure in a strictly GTP-dependent manner. Interacts directly with several other division proteins.

The protein localises to the cytoplasm. In terms of biological role, essential cell division protein that forms a contractile ring structure (Z ring) at the future cell division site. The regulation of the ring assembly controls the timing and the location of cell division. One of the functions of the FtsZ ring is to recruit other cell division proteins to the septum to produce a new cell wall between the dividing cells. Binds GTP and shows GTPase activity. This Pyrococcus furiosus (strain ATCC 43587 / DSM 3638 / JCM 8422 / Vc1) protein is Cell division protein FtsZ 2.